Consider the following 726-residue polypeptide: Methionine--tRNA ligase (726 aa).

Positions 12 to 22 match the 'HIGH' region motif; that stretch reads PYVNNIPHLGN. Zn(2+)-binding residues include C143, C146, C155, and C158. The short motif at 330 to 334 is the 'KMSKS' region element; that stretch reads KFSKS. Residue K333 coordinates ATP. The tRNA-binding domain occupies 562–667; it reads FSEQICLKTV…DNPIPGERVI (106 aa).

Belongs to the class-I aminoacyl-tRNA synthetase family. MetG type 1 subfamily. As to quaternary structure, homodimer. Zn(2+) serves as cofactor.

The protein resides in the cytoplasm. The catalysed reaction is tRNA(Met) + L-methionine + ATP = L-methionyl-tRNA(Met) + AMP + diphosphate. Is required not only for elongation of protein synthesis but also for the initiation of all mRNA translation through initiator tRNA(fMet) aminoacylation. The sequence is that of Methionine--tRNA ligase from Borrelia recurrentis (strain A1).